Reading from the N-terminus, the 504-residue chain is L-carnitine/gamma-butyrobetaine antiporter (504 aa).

12 helical membrane passes run 10–30, 51–71, 92–112, 143–163, 195–215, 231–251, 263–283, 316–336, 347–367, 398–418, 446–466, and 475–495; these read MEPK…WLTV, WGWA…WLVF, IFMM…SIEI, GPLP…FFFV, FYLV…TPLV, LDAI…ACGL, SYLS…SFIM, WSVF…IFLA, LCFG…TVLG, WAAL…CFIA, LLVR…LLAL, and AIIA…LSFI.

The protein belongs to the BCCT transporter (TC 2.A.15) family. CaiT subfamily. As to quaternary structure, homotrimer.

The protein localises to the cell inner membrane. The catalysed reaction is 4-(trimethylamino)butanoate(in) + (R)-carnitine(out) = 4-(trimethylamino)butanoate(out) + (R)-carnitine(in). It participates in amine and polyamine metabolism; carnitine metabolism. Functionally, catalyzes the exchange of L-carnitine for gamma-butyrobetaine. The sequence is that of L-carnitine/gamma-butyrobetaine antiporter from Shigella dysenteriae serotype 1 (strain Sd197).